A 482-amino-acid chain; its full sequence is Rho GTPase-activating protein 15 (482 aa).

5 positions are modified to phosphoserine: S51, S111, S205, S208, and S250. A PH domain is found at 87-198 (MVEKEGYLQK…WFHAIKNAID (112 aa)). The Rho-GAP domain maps to 288–477 (SHLHTVCERE…FMLTEYDKIF (190 aa)).

The protein localises to the cytoplasm. It localises to the membrane. GTPase activator for the Rho-type GTPases by converting them to an inactive GDP-bound state. Has activity toward RAC1. Overexpression results in an increase in actin stress fibers and cell contraction. This Rattus norvegicus (Rat) protein is Rho GTPase-activating protein 15 (Arhgap15).